Consider the following 662-residue polypeptide: UvrABC system protein B (662 aa).

The 390-residue stretch at 25–414 (TGLNSKKRSQ…GTVVELIIRP (390 aa)) folds into the Helicase ATP-binding domain. Residue 38-45 (GITGSGKT) coordinates ATP. The short motif at 91–114 (YYDYYQPESYIVRTDTFIEKDSSI) is the Beta-hairpin element. The 163-residue stretch at 430-592 (QVEDLISEIQ…IIPKTINRAI (163 aa)) folds into the Helicase C-terminal domain. The 36-residue stretch at 622-657 (KAHMDKLKKEMFKAASNLEFEQAAKLRNQLKALEEA) folds into the UVR domain.

Belongs to the UvrB family. In terms of assembly, forms a heterotetramer with UvrA during the search for lesions. Interacts with UvrC in an incision complex.

The protein localises to the cytoplasm. Functionally, the UvrABC repair system catalyzes the recognition and processing of DNA lesions. A damage recognition complex composed of 2 UvrA and 2 UvrB subunits scans DNA for abnormalities. Upon binding of the UvrA(2)B(2) complex to a putative damaged site, the DNA wraps around one UvrB monomer. DNA wrap is dependent on ATP binding by UvrB and probably causes local melting of the DNA helix, facilitating insertion of UvrB beta-hairpin between the DNA strands. Then UvrB probes one DNA strand for the presence of a lesion. If a lesion is found the UvrA subunits dissociate and the UvrB-DNA preincision complex is formed. This complex is subsequently bound by UvrC and the second UvrB is released. If no lesion is found, the DNA wraps around the other UvrB subunit that will check the other stand for damage. The polypeptide is UvrABC system protein B (Rickettsia prowazekii (strain Madrid E)).